Reading from the N-terminus, the 443-residue chain is MSTTDSIVSSQTKQSSWRKSDTTWTLGLFGTAIGAGVLFFPIRAGFGGLIPILLMLVLAYPIAFYCHRALARLCLSGSNPSGNITETVEEHFGKTGGVVITFLYFFAICPLLWIYGVTITNTFMTFWENQLQMPALNRGFVALFLLLLMAFVIWFGKDLMVKVMSYLVWPFIASLVLISLSLIPYWNSAVIDQVDLSNIALTGHDGILVTVWLGISIMVFSFNFSPIVSSFVVSKREEYEKDFGREFTERKCSQIISRASMLMVAVVMFFAFSCLFTLSPANMADAKAQNIPVLSYLANHFASLSGTKSTFATVLEYGASIIALVAIFKSFFGHYLGTLEGLNGLVLKFGYKGDKTKVSLGKLNTISMIFIMGSTWVVAYANPNILDLIEAMGAPIIASLLCLLPMYAIRKAPSLAKYRGRLDNVFVTVIGLLTILNIVYKLF.

11 helical membrane-spanning segments follow: residues 22-42 (TTWT…FFPI), 44-64 (AGFG…PIAF), 97-117 (GVVI…IYGV), 140-160 (FVAL…KDLM), 163-183 (VMSY…LSLI), 207-227 (ILVT…FSPI), 261-281 (MLMV…LSPA), 319-339 (ASII…LGTL), 366-386 (ISMI…PNIL), 389-409 (IEAM…MYAI), and 423-443 (DNVF…YKLF).

Belongs to the amino acid/polyamine transporter 2 family. SdaC/TdcC subfamily.

It localises to the cell inner membrane. The enzyme catalyses L-threonine(in) + H(+)(in) = L-threonine(out) + H(+)(out). The catalysed reaction is L-serine(in) + H(+)(in) = L-serine(out) + H(+)(out). In terms of biological role, involved in the import of threonine and serine into the cell, with the concomitant import of a proton (symport system). The protein is Threonine/serine transporter TdcC of Citrobacter koseri (strain ATCC BAA-895 / CDC 4225-83 / SGSC4696).